A 422-amino-acid polypeptide reads, in one-letter code: Aliphatic (R)-hydroxynitrile lyase (422 aa).

Zn(2+) is bound by residues cysteine 63, histidine 85, cysteine 115, cysteine 118, cysteine 121, cysteine 129, and cysteine 199.

It belongs to the zinc-containing alcohol dehydrogenase family. In terms of assembly, homodimer. The cofactor is Zn(2+).

The catalysed reaction is (2R)-2-hydroxy-2-methylbutanenitrile = butan-2-one + hydrogen cyanide. Its function is as follows. Involved in the catabolism of cyanogenic glycosides. Naturally occurring substrates are the aliphatic acetone cyanohydrin and butan-2-one cyanohydrin, which are the aglycones of the cyanogenic glycosides linamarin, lotaustralin, linustatin and neolinustatin. Can use various aliphatic ketones and aldehydes as substrates, but not aromatic ketones. This is Aliphatic (R)-hydroxynitrile lyase from Linum usitatissimum (Flax).